Reading from the N-terminus, the 142-residue chain is Mitochondrial import receptor subunit TOM22 homolog (142 aa).

Positions 1 to 18 are enriched in low complexity; that stretch reads MAAAVAAAGAGEPLSPEE. The segment at 1-41 is disordered; that stretch reads MAAAVAAAGAGEPLSPEELLPKAEAEKAEEELEEDDDDELD. Ala-2 carries the post-translational modification N-acetylalanine. The Cytoplasmic segment spans residues 2–83; that stretch reads AAAVAAAGAG…AQKMYRFSRA (82 aa). Ser-15 bears the Phosphoserine mark. Residues 27–41 show a composition bias toward acidic residues; it reads KAEEELEEDDDDELD. The segment at 41–50 is import sequence; necessary for mitochondrion outer membrane localization and integration in the TOM complex; it reads DETLSERLWG. Thr-43 carries the post-translational modification Phosphothreonine. At Ser-45 the chain carries Phosphoserine. Positions 83–103 are TMD; necessary for mitochondrion outer membrane localization and integration in the TOM complex; it reads AALWIGTTSFMILVLPVVFET. Residues 84-103 form a helical membrane-spanning segment; sequence ALWIGTTSFMILVLPVVFET. Over 104-142 the chain is Mitochondrial intermembrane; it reads EKLQMEQQQQLQQRQILLGPNTGLSGGMPGALPPLPGKM. A C-tail signal; necessary for mitochondrion outer membrane localization and integration in the TOM complex region spans residues 123–142; the sequence is PNTGLSGGMPGALPPLPGKM.

Belongs to the Tom22 family. In terms of assembly, forms part of the preprotein translocase complex of the outer mitochondrial membrane (TOM complex) which consists of at least 7 different proteins (TOMM5, TOMM6, TOMM7, TOMM20, TOMM22, TOMM40 and TOMM70). Interacts with PPP2R2B and TOMM40.

Its subcellular location is the mitochondrion outer membrane. In terms of biological role, central receptor component of the translocase of the outer membrane of mitochondria (TOM complex) responsible for the recognition and translocation of cytosolically synthesized mitochondrial preproteins. Together with the peripheral receptor TOM20 functions as the transit peptide receptor and facilitates the movement of preproteins into the translocation pore. Required for the translocation across the mitochondrial outer membrane of cytochrome P450 monooxygenases. This chain is Mitochondrial import receptor subunit TOM22 homolog (Tomm22), found in Mus musculus (Mouse).